Consider the following 105-residue polypeptide: Platelet factor 4 (105 aa).

The N-terminal stretch at 1–29 (MSAAAVFRGLRPSPELLLLGLLLLPAVVA) is a signal peptide. An O-linked (GalNAc...) threonine; partial glycan is attached at Thr-31. 2 disulfide bridges follow: Cys-44-Cys-71 and Cys-46-Cys-87. Phosphoserine is present on Ser-61. 96–102 (KKIIKKL) serves as a coordination point for heparin.

It belongs to the intercrine alpha (chemokine CxC) family. Homotetramer. Interacts with TNFAIP6 (via Link domain). Interacts with CCR1. Interacts with CXCR3. Interacts with THBD; this interaction enhances generation of activated protein C. In terms of processing, O-linked glycan consists of Gal-GalNAc disaccharide which is modified with sialic acid residues (microheterogeneity).

Its subcellular location is the secreted. Chemokine released during platelet aggregation that plays a role in different biological processes including hematopoiesis, cell proliferation, differentiation, and activation. Acts via different functional receptors including CCR1, CXCR3A or CXCR3B. Upon interaction with CXCR3A receptor, induces activated T-lymphocytes migration mediated via downstream Ras/extracellular signal-regulated kinase (ERK) signaling. Neutralizes the anticoagulant effect of heparin by binding more strongly to heparin than to the chondroitin-4-sulfate chains of the carrier molecule. Plays a role in the inhibition of hematopoiesis and in the maintenance of hematopoietic stem cell (HSC) quiescence. Chemotactic for neutrophils and monocytes via CCR1. Inhibits endothelial cell proliferation. In cooperation with toll-like receptor 8/TLR8, induces chromatin remodeling and activates inflammatory gene expression via the TBK1-IRF5 axis. In addition, induces myofibroblast differentiation and collagen synthesis in different precursor cells, including endothelial cells, by stimulating endothelial-to-mesenchymal transition. Interacts with thrombomodulin/THBD to enhance the activation of protein C and thus potentiates its anticoagulant activity. The polypeptide is Platelet factor 4 (Pf4) (Rattus norvegicus (Rat)).